Consider the following 179-residue polypeptide: Inner membrane-spanning protein YciB (179 aa).

Helical transmembrane passes span 22–42 (IYAATAALIVATAIVLIYSWV), 50–70 (MALITFVLVVVFGGLTLFFHN), 76–96 (WKVTVIYALFAGALLVSQWVM), 121–141 (LAWAVFFILCGLANIYIAFWL), and 149–169 (FKVFGLTALTLIFTLLSGIYI).

It belongs to the YciB family.

It is found in the cell inner membrane. Plays a role in cell envelope biogenesis, maintenance of cell envelope integrity and membrane homeostasis. The polypeptide is Inner membrane-spanning protein YciB (Shigella boydii serotype 4 (strain Sb227)).